The sequence spans 329 residues: Transposable element Tc3 transposase (329 aa).

A DNA-binding region spans residues 2-135 (PRGSALSDTE…LEFAKNNMGT (134 aa)).

The protein belongs to the transposase 5 family. In terms of assembly, homodimer or homotetramer.

The protein localises to the nucleus. In terms of biological role, binds specifically to the terminal nucleotides of the TC3 inverted repeat. Its expression results in frequent excision and transposition of endogenous TC3 elements. TC3 transposase acts by making double strand breaks at the ends of TC3 element. The excised element would then be inserted into a target sequence. The chain is Transposable element Tc3 transposase (tc3a) from Caenorhabditis elegans.